The sequence spans 123 residues: Small ribosomal subunit protein uS11 (123 aa).

Belongs to the universal ribosomal protein uS11 family. As to quaternary structure, part of the 30S ribosomal subunit. Interacts with proteins S7 and S18. Binds to IF-3.

Its function is as follows. Located on the platform of the 30S subunit, it bridges several disparate RNA helices of the 16S rRNA. Forms part of the Shine-Dalgarno cleft in the 70S ribosome. The sequence is that of Small ribosomal subunit protein uS11 from Coxiella burnetii (strain RSA 331 / Henzerling II).